Reading from the N-terminus, the 638-residue chain is tRNA uridine 5-carboxymethylaminomethyl modification enzyme MnmG (638 aa).

Residues 13 to 18 (GGGHAG), Val-125, and Ser-180 each bind FAD. 273 to 287 (GPRYCPSIEDKIHRF) serves as a coordination point for NAD(+). Gln-370 provides a ligand contact to FAD.

This sequence belongs to the MnmG family. Homodimer. Heterotetramer of two MnmE and two MnmG subunits. It depends on FAD as a cofactor.

The protein resides in the cytoplasm. Its function is as follows. NAD-binding protein involved in the addition of a carboxymethylaminomethyl (cmnm) group at the wobble position (U34) of certain tRNAs, forming tRNA-cmnm(5)s(2)U34. This Cellvibrio japonicus (strain Ueda107) (Pseudomonas fluorescens subsp. cellulosa) protein is tRNA uridine 5-carboxymethylaminomethyl modification enzyme MnmG.